A 545-amino-acid polypeptide reads, in one-letter code: Afadin- and alpha-actinin-binding protein B (545 aa).

Coiled-coil stretches lie at residues 106–287 (RSKE…SQRK) and 358–442 (ARGD…AIRL). The segment at 497-545 (HDRHLASSGDHYQRPRKTLPITPSSKHSLTQRESVAWRDSSISPNGTDF) is disordered. 2 stretches are compositionally biased toward polar residues: residues 517 to 529 (ITPS…TQRE) and 536 to 545 (SSISPNGTDF).

This sequence belongs to the ADIP family. In terms of assembly, interacts with WRAP73.

The protein resides in the cell junction. It is found in the adherens junction. The protein localises to the cytoplasm. It localises to the cytoskeleton. Its subcellular location is the microtubule organizing center. The protein resides in the centrosome. It is found in the centriolar satellite. Its function is as follows. Belongs to an adhesion system, which plays a role in the organization of homotypic, interneuronal and heterotypic cell-cell adherens junctions (AJs). Involved in cell movement. Acts as a centrosome maturation factor, probably by maintaining the integrity of the pericentriolar material and proper microtubule nucleation at mitotic spindle poles. The function seems to implicate at least in part WRAP73; the SSX2IP:WRAP73 complex is proposed to act as regulator of spindle anchoring at the mitotic centrosome. The chain is Afadin- and alpha-actinin-binding protein B (ssx2ip-b) from Xenopus laevis (African clawed frog).